The primary structure comprises 119 residues: Large ribosomal subunit protein uL18 (119 aa).

It belongs to the universal ribosomal protein uL18 family. In terms of assembly, part of the 50S ribosomal subunit; part of the 5S rRNA/L5/L18/L25 subcomplex. Contacts the 5S and 23S rRNAs.

Its function is as follows. This is one of the proteins that bind and probably mediate the attachment of the 5S RNA into the large ribosomal subunit, where it forms part of the central protuberance. This chain is Large ribosomal subunit protein uL18, found in Helicobacter pylori (strain HPAG1).